We begin with the raw amino-acid sequence, 454 residues long: Notoamide E oxidase notB (454 aa).

Residues serine 15–isoleucine 35 form a helical membrane-spanning segment. Residues glutamate 48 and glycine 61 each contribute to the FAD site. Asparagine 75 carries N-linked (GlcNAc...) asparagine glycosylation. Residue arginine 121 participates in FAD binding. Residues arginine 199 and tyrosine 229 contribute to the active site. 2 residues coordinate FAD: aspartate 322 and glycine 335.

The protein belongs to the paxM FAD-dependent monooxygenase family. Requires FAD as cofactor.

The protein localises to the membrane. It catalyses the reaction notoamide E + NADPH + O2 + H(+) = notoamide C + NADP(+) + H2O. The catalysed reaction is notoamide E + NADPH + O2 + H(+) = notoamide D + NADP(+) + H2O. It participates in alkaloid biosynthesis. FAD-dependent monooxygenase; part of the gene cluster that mediates the biosynthesis of notoamide, a fungal indole alkaloid that belongs to a family of natural products containing a characteristic bicyclo[2.2.2]diazaoctane core. The first step of notoamide biosynthesis involves coupling of L-proline and L-tryptophan by the bimodular NRPS notE, to produce cyclo-L-tryptophan-L-proline called brevianamide F. The reverse prenyltransferase notF then acts as a deoxybrevianamide E synthase and converts brevianamide F to deoxybrevianamide E via reverse prenylation at C-2 of the indole ring leading to the bicyclo[2.2.2]diazaoctane core. Deoxybrevianamide E is further hydroxylated at C-6 of the indole ring, likely catalyzed by the cytochrome P450 monooxygenase notG, to yield 6-hydroxy-deoxybrevianamide E. 6-hydroxy-deoxybrevianamide E is a specific substrate of the prenyltransferase notC for normal prenylation at C-7 to produce 6-hydroxy-7-prenyl-deoxybrevianamide, also called notoamide S. As the proposed pivotal branching point in notoamide biosynthesis, notoamide S can be diverted to notoamide E through an oxidative pyran ring closure putatively catalyzed by either notH cytochrome P450 monooxygenase or the notD FAD-linked oxidoreductase. This step would be followed by an indole 2,3-epoxidation-initiated pinacol-like rearrangement catalyzed by the notB FAD-dependent monooxygenase leading to the formation of notoamide C and notoamide D. On the other hand notoamide S is converted to notoamide T by notH (or notD), a bifunctional oxidase that also functions as the intramolecular Diels-Alderase responsible for generation of (+)-notoamide T. To generate antipodal (-)-notoaminide T, notH' (or notD') in Aspergillus versicolor is expected to catalyze a Diels-Alder reaction leading to the opposite stereochemistry. The remaining oxidoreductase notD (or notH) likely catalyzes the oxidative pyran ring formation to yield (+)-stephacidin A. The FAD-dependent monooxygenase notI is highly similar to notB and is predicted to catalyze a similar conversion from (+)-stephacidin A to (-)-notoamide B via the 2,3-epoxidation of (+)-stephacidin A followed by a pinacol-type rearrangement. Finally, it remains unclear which enzyme could be responsible for the final hydroxylation steps leading to notoamide A and sclerotiamide. This chain is Notoamide E oxidase notB, found in Aspergillus sp. (strain MF297-2).